Consider the following 433-residue polypeptide: Pyroglutamylated RF-amide peptide receptor (433 aa).

Topologically, residues 1–46 (MQALNITAEQFSRLLSAHNLTREQFIHRYGLRPLVYTPELPARAKL) are extracellular. Asn-5 and Asn-19 each carry an N-linked (GlcNAc...) asparagine glycan. A helical membrane pass occupies residues 47-67 (AFALAGALIFALALFGNSLVI). The Cytoplasmic portion of the chain corresponds to 68 to 81 (YVVTRSKAMRTVTN). Residues 82 to 102 (IFICSLALSDLLIAFFCIPVT) traverse the membrane as a helical segment. Topologically, residues 103–120 (MLQNISDKWLGGAFICKM) are extracellular. Residues 121–141 (VPFVQSTAVVTEILTMTCIAV) traverse the membrane as a helical segment. The Cytoplasmic portion of the chain corresponds to 142 to 162 (ERHQGLIHPFKMKWQYTTRRA). Residues 163–183 (FTILGVVWLAAIIVGSPMWHV) traverse the membrane as a helical segment. Residues 184 to 212 (QRLEIKYDFLYEKEHVCCLEEWASPMHQR) are Extracellular-facing. A helical membrane pass occupies residues 213 to 233 (IYTTFILVILFLLPLVVMLVL). Over 234 to 271 (YSKIGYELWIKKRVGDSSALQTIHGKEMSKIARKKKRA) the chain is Cytoplasmic. Residues 272–292 (VVMMVTVVALFAACWAPFHVV) form a helical membrane-spanning segment. Topologically, residues 293-313 (HMMVEYSNFEKEYDDVTIKMV) are extracellular. The helical transmembrane segment at 314-334 (FAVAQTIGFFNSICNPFVYAF) threads the bilayer. Topologically, residues 335 to 433 (MNENFKKNFL…NSTFGSGHEL (99 aa)) are cytoplasmic.

This sequence belongs to the G-protein coupled receptor 1 family. Expressed widely in the brain with high levels in the cortex and hypothalamus, and moderate levels in the brain stem, caudate nucleus, midbrain hippocampus, thalamus, trigeminal ganglia and spinal cord. Particularly strong expression detected in the mitral cell layer of the olfactory bulb, accessory olfactory bulb, island of Calleja and nucleus of the solitary tract. In peripheral tissues, expressed at moderate levels in the eye, liver, kidney, pituitary gland, testis and thymus.

The protein localises to the cell membrane. In terms of biological role, receptor for the orexigenic neuropeptide QRFP. The activity of this receptor is mediated by G proteins that modulate adenylate cyclase activity and intracellular calcium levels. This chain is Pyroglutamylated RF-amide peptide receptor (Qrfpr), found in Mus musculus (Mouse).